A 115-amino-acid chain; its full sequence is U3-lycotoxin-Ls1k (115 aa).

The signal sequence occupies residues 1 to 20 (MKFVLLFGVLLVTLFSYSSA). Positions 21–44 (EMLDDFDQADEDELLSLIEKEEAR) are excised as a propeptide. 4 disulfide bridges follow: Cys48/Cys63, Cys55/Cys72, Cys62/Cys87, and Cys74/Cys85.

This sequence belongs to the neurotoxin 19 (CSTX) family. 01 subfamily. In terms of tissue distribution, expressed by the venom gland.

It localises to the secreted. The sequence is that of U3-lycotoxin-Ls1k from Lycosa singoriensis (Wolf spider).